We begin with the raw amino-acid sequence, 487 residues long: Cytochrome P450 monooxygenase pyvB (487 aa).

The chain crosses the membrane as a helical span at residues 17 to 37 (PAYSSVVIGALVVCLVCLVWP). Cys-426 provides a ligand contact to heme.

Belongs to the cytochrome P450 family. Requires heme as cofactor.

It localises to the membrane. It functions in the pathway secondary metabolite biosynthesis. Its function is as follows. Cytochrome P450 monooxygenase; part of the gene cluster that mediates the biosynthesis of pyranoviolin A, a pyranonigrin analog with a C-3 methoxy group. Initially, the PKS portion of pyvA synthesizes C-10 carbon chain from 5 molecules of malonyl-CoA, which is then condensed with the thiolation (T) domain-bound glycine activated by the adenylation (A) domain. The subsequent chain release by Dieckmann condensation (DKC) could be catalyzed by the TE domain present at the C-terminus of pyvA and/or the alpha/beta hydrolase pyvD, installing the tetramic acid moiety. The FAD-dependent monooxygenase pyvC next epoxidizes one of the olefins of the polyketide part, and the epoxide ring-opening induces the dihydro-gamma-pyrone ring formation. The cytochrome P450 monooxygeanse pyvB would be responsible for the 2 consecutive reactions, in which the dihydro-gamma-pyrone is oxidized to gamma-pyrone and C-7 is hydroxylated to yield pyranonigrin F. Finally, the O-methyltransferase pyvH methylates the C-3 hydroxy group to complete the biosynthesis. In Aspergillus violaceofuscus (strain CBS 115571), this protein is Cytochrome P450 monooxygenase pyvB.